Consider the following 144-residue polypeptide: Maximins 6/Hv (144 aa).

The N-terminal stretch at 1–18 is a signal peptide; it reads MNFKYIVAVSFLIASGYA. The propeptide occupies 19–43; it reads RSEENDVQSLSQREVLEEETLREIR. The residue at position 70 (Asn-70) is an Asparagine amide. A propeptide spanning residues 74 to 123 is cleaved from the precursor; the sequence is TAKGHEVMKRLEAVMRDLDSLDHPEEASERETRGFNQEEIANLFTKKEKR. The residue at position 143 (Ile-143) is an Isoleucine amide.

The protein belongs to the bombinin family. Expressed by the skin glands.

It localises to the secreted. Its function is as follows. Shows antimicrobial activity against bacteria and against the fungus C.albicans. It has little hemolytic activity. Shows antimicrobial activity against bacteria and against the fungus C.albicans. Shows strong hemolytic activity. This chain is Maximins 6/Hv, found in Bombina maxima (Giant fire-bellied toad).